A 62-amino-acid chain; its full sequence is Sperm protamine P1 (62 aa).

Residues 1-62 form a disordered region; it reads MARYRHSRSR…RYSRRRRRRY (62 aa).

This sequence belongs to the protamine P1 family. As to expression, testis.

The protein localises to the nucleus. It is found in the chromosome. Functionally, protamines substitute for histones in the chromatin of sperm during the haploid phase of spermatogenesis. They compact sperm DNA into a highly condensed, stable and inactive complex. This Dendrolagus dorianus (Doria's tree-kangaroo) protein is Sperm protamine P1 (PRM1).